A 344-amino-acid chain; its full sequence is Ferredoxin--NADP reductase (344 aa).

Residues S12, D31, K39, Y43, V83, I118, D285, and S326 each coordinate FAD.

Belongs to the ferredoxin--NADP reductase type 2 family. Homodimer. Requires FAD as cofactor.

The catalysed reaction is 2 reduced [2Fe-2S]-[ferredoxin] + NADP(+) + H(+) = 2 oxidized [2Fe-2S]-[ferredoxin] + NADPH. The protein is Ferredoxin--NADP reductase of Staphylococcus aureus (strain MW2).